Here is a 181-residue protein sequence, read N- to C-terminus: Adenylate kinase (181 aa).

10 to 15 (GAGKGT) serves as a coordination point for ATP. An NMP region spans residues 30–59 (STGDLFRDNITNETELGVEAKRYLDAGDLV). Residues Thr31, Arg36, 57–59 (DLV), 85–88 (GYPR), and Gln92 contribute to the AMP site. The interval 126–132 (GRGRADD) is LID. Arg127 contacts ATP. AMP-binding residues include Arg129 and Arg140. Gly166 is a binding site for ATP.

The protein belongs to the adenylate kinase family. As to quaternary structure, monomer.

It localises to the cytoplasm. The catalysed reaction is AMP + ATP = 2 ADP. The protein operates within purine metabolism; AMP biosynthesis via salvage pathway; AMP from ADP: step 1/1. Catalyzes the reversible transfer of the terminal phosphate group between ATP and AMP. Plays an important role in cellular energy homeostasis and in adenine nucleotide metabolism. The sequence is that of Adenylate kinase from Mycobacterium sp. (strain MCS).